A 432-amino-acid polypeptide reads, in one-letter code: FMRFamide peptide receptor frpr-18 (432 aa).

Residues 1 to 8 (MESQQLMA) are Extracellular-facing. Residues 9–29 (CAILVIVLVGIFGNSLSFILF) form a helical membrane-spanning segment. Residues 30–42 (SRPHMRSSSVNVL) lie on the Cytoplasmic side of the membrane. The chain crosses the membrane as a helical span at residues 43–63 (LCALSFFDFSLLTLSIPIFVI). The Extracellular portion of the chain corresponds to 64 to 84 (PNLDLWANDLSLSTYMAYILK). The chain crosses the membrane as a helical span at residues 85-105 (LIYPINLMMQTCSVYIMVMIT). The Cytoplasmic portion of the chain corresponds to 106–128 (LERWVAVCRPLQVRVWCTPRKSR). The chain crosses the membrane as a helical span at residues 129–149 (NAILVIIVSAFLYNFVRFFEY). Over 150–176 (RFVVTESGALYEKWLRDPGKHRWYYVG) the chain is Extracellular. A helical transmembrane segment spans residues 177-197 (YYTILYIVTHFLVPFSVMAFA). Residues 198-225 (NGHVIVAMCKLSKTRQMLTRQQQREQST) are Cytoplasmic-facing. A helical membrane pass occupies residues 226–246 (TVMLLIVTFVFAICNTLPFLL). The Extracellular segment spans residues 247–271 (NVSESIFPTLFQDESTRGLAYWLND). The helical transmembrane segment at 272 to 292 (LSNLLVVLNSGTTFIIYFTFS) threads the bilayer. Over 293 to 432 (EKYRQTLVFI…GEPDSPCQPC (140 aa)) the chain is Cytoplasmic. Disordered stretches follow at residues 328–349 (ISSETGGQIQRQGSKMSNSSRS) and 388–411 (KLPSEKRKKKLHKMSAVEHRGMPE).

Belongs to the G-protein coupled receptor 1 family. In terms of tissue distribution, expressed in a subset of neurons in the head, midbody, and tail, including AIY, ASI, BAG, URA, CAN, I6, PVQ, DVA, RIM, and VC, and in the anal sphincter and intestinal muscles. Expression from the ASI neurons is involved in promoting arousal.

Its subcellular location is the cell membrane. Functionally, G-protein coupled receptor for flp-2 neuropeptides. May act through the G(q) alpha type of G proteins. Involved in mediating arousal from the sleep-like state called lethargus, which occurs during molting between larval and adult stages, in part by regulating touch sensitivity, and working in concert with neuropeptide pdf-1. The polypeptide is FMRFamide peptide receptor frpr-18 (Caenorhabditis elegans).